The sequence spans 242 residues: Large ribosomal subunit protein uL1 (242 aa).

This sequence belongs to the universal ribosomal protein uL1 family. Part of the 50S ribosomal subunit.

Functionally, binds directly to 23S rRNA. The L1 stalk is quite mobile in the ribosome, and is involved in E site tRNA release. In terms of biological role, protein L1 is also a translational repressor protein, it controls the translation of the L11 operon by binding to its mRNA. The polypeptide is Large ribosomal subunit protein uL1 (Dictyoglomus turgidum (strain DSM 6724 / Z-1310)).